A 409-amino-acid chain; its full sequence is Putative protein disulfide-isomerase DDB_G0275025 (409 aa).

The first 21 residues, 1–21 (MKLINICIFIFAIICIESTFG), serve as a signal peptide directing secretion. The Thioredoxin domain occupies 28-140 (NVINLTKKNF…AKFSLAKLPS (113 aa)). A disulfide bridge connects residues C57 and C60. The disordered stretch occupies residues 245 to 273 (SNNDNNNNNNNNNNEESTKTTTTEKDPAS). Residues 247-259 (NDNNNNNNNNNNE) show a composition bias toward low complexity. Residues 260–273 (ESTKTTTTEKDPAS) are compositionally biased toward basic and acidic residues. The Prevents secretion from ER signature appears at 406-409 (KDEL).

Belongs to the protein disulfide isomerase family.

Its subcellular location is the endoplasmic reticulum lumen. It carries out the reaction Catalyzes the rearrangement of -S-S- bonds in proteins.. The polypeptide is Putative protein disulfide-isomerase DDB_G0275025 (Dictyostelium discoideum (Social amoeba)).